Here is a 637-residue protein sequence, read N- to C-terminus: Probable potassium transport system protein Kup (637 aa).

The next 12 helical transmembrane spans lie at 24-44 (LAIA…LYAL), 64-84 (VISL…LLFV), 113-133 (AGAL…DAVI), 151-171 (PHLS…LFWI), 182-202 (LFGP…VYHI), 225-245 (LLQA…AEAL), 261-281 (AYGL…ALLI), 290-310 (PFFL…STVA), 351-371 (IYVP…VIGF), 381-401 (YGIA…VVMV), 409-429 (LLVG…FGAN), and 433-453 (VAQG…LLMT).

Belongs to the HAK/KUP transporter (TC 2.A.72) family.

The protein resides in the cell inner membrane. It catalyses the reaction K(+)(in) + H(+)(in) = K(+)(out) + H(+)(out). Transport of potassium into the cell. Likely operates as a K(+):H(+) symporter. The polypeptide is Probable potassium transport system protein Kup (Burkholderia ambifaria (strain ATCC BAA-244 / DSM 16087 / CCUG 44356 / LMG 19182 / AMMD) (Burkholderia cepacia (strain AMMD))).